Consider the following 774-residue polypeptide: MAKLTLEVEQYTQNLREKLQEAGYSYYVLDQPIMEDAVYDHLLRELQELESQYPQLIVSDSPTQRVGEKPATKFVSVKHNIPLYSLENAFNIQELKSWQERWQRQTLLENQRLTLPLRGEVKIKNSIDESDNFSTVNSLAPVITGSNFDEIDLASVDYICELKIDGSALALTYENGLLVRGATRGDGIMGEDITQNVKTINSIPLKLKVDNPPLLVEVRGEAFLSINVFENINAEREKIGEIIFANPRNAAAGTLRQLDSKIVAKRRLDFFAYTLYLEENESNFLQFYTQSQCLELLKKLGFKVNPNGQVCSSLNEVEAYYQYWDKQRENLPYLTDGVVVKLNSLSLQEKLGFTQKYPRWAIALKYPAEEIPTIVQGVTVQVGRTGAITPVAELKPVQLAGTTVQRASLHNSDRLAELDLHIGDTVIVRKAGEIIPEVVRVLPELRPKKAQRFQMPTHCPECSQPLIKPRNEAVTRCINTSCPAILRGSLAHWASRAALDINGLGEKLVQQLVNSGLVKSVADLYNLTMEDLTSLERMGKKSANKLIEAMGTSKAQPWRRVLYGLGIRHVGTVNAELLTQKFPTVAQLSQAKATDIETVHGIGPEIAQYVEQWFRVPANQNLVERLKIAGVTMETKDSTSGMAKLTETVLAIQNLAARQNLVARQNLENLVERLKIAGVTMETKDSTSDVVEVQSGLLRGKTFVLTGTLPTMRRDEAKNLIQNAGGKVTSSVSSKTDFIVVGEDGGSKLEKAKKLGVKELSESELLEALAVTGI.

NAD(+) is bound by residues 36–40 (DAVYD), 85–86 (SL), and Glu-161. Lys-163 serves as the catalytic N6-AMP-lysine intermediate. NAD(+) is bound by residues Arg-184, Glu-221, Lys-341, and Lys-365. Residues Cys-459, Cys-462, Cys-477, and Cys-482 each contribute to the Zn(2+) site. Residues 693 to 774 (VQSGLLRGKT…LLEALAVTGI (82 aa)) form the BRCT domain.

This sequence belongs to the NAD-dependent DNA ligase family. LigA subfamily. Mg(2+) is required as a cofactor. Requires Mn(2+) as cofactor.

It catalyses the reaction NAD(+) + (deoxyribonucleotide)n-3'-hydroxyl + 5'-phospho-(deoxyribonucleotide)m = (deoxyribonucleotide)n+m + AMP + beta-nicotinamide D-nucleotide.. Functionally, DNA ligase that catalyzes the formation of phosphodiester linkages between 5'-phosphoryl and 3'-hydroxyl groups in double-stranded DNA using NAD as a coenzyme and as the energy source for the reaction. It is essential for DNA replication and repair of damaged DNA. The polypeptide is DNA ligase (Trichodesmium erythraeum (strain IMS101)).